The sequence spans 402 residues: p-cumate 2,3-dioxygenase system, ferredoxin--NAD(+) reductase component (402 aa).

Residues Ala-16, Lys-51, Val-83, Arg-131, and Asp-275 each coordinate FAD.

The protein belongs to the FAD-dependent oxidoreductase family. In terms of assembly, the p-cumate 2,3-dioxygenase multicomponent enzyme system is composed of an electron transfer component and a dioxygenase component (iron sulfur protein (ISP)). The electron transfer component is composed of a ferredoxin reductase (CmtAa) and a ferredoxin (CmtAd), and the dioxygenase component is formed of a large alpha subunit (CmtAb) and a small beta subunit (CmtAc). It depends on FAD as a cofactor.

The catalysed reaction is 2 reduced [2Fe-2S]-[ferredoxin] + NAD(+) + H(+) = 2 oxidized [2Fe-2S]-[ferredoxin] + NADH. It participates in aromatic compound metabolism; p-cumate degradation; acetaldehyde and pyruvate from p-cumate. Functionally, component of the p-cumate 2,3-dioxygenase multicomponent enzyme system which catalyzes the incorporation of both atoms of molecular oxygen into p-cumate to form cis-2,3-dihydroxy-2,3-dihydro-p-cumate. Ferredoxin reductase catalyzes the transfer of electrons from NADH to ferredoxin (CmtAd). This chain is p-cumate 2,3-dioxygenase system, ferredoxin--NAD(+) reductase component, found in Pseudomonas putida (Arthrobacter siderocapsulatus).